Reading from the N-terminus, the 268-residue chain is 4-hydroxy-tetrahydrodipicolinate reductase (268 aa).

NAD(+) contacts are provided by residues 9–14 (GVCGRM), Glu35, 99–101 (GTT), and 123–126 (APNY). Catalysis depends on His156, which acts as the Proton donor/acceptor. His157 is a (S)-2,3,4,5-tetrahydrodipicolinate binding site. The active-site Proton donor is Lys160. 166 to 167 (GT) serves as a coordination point for (S)-2,3,4,5-tetrahydrodipicolinate.

Belongs to the DapB family.

The protein localises to the cytoplasm. It carries out the reaction (S)-2,3,4,5-tetrahydrodipicolinate + NAD(+) + H2O = (2S,4S)-4-hydroxy-2,3,4,5-tetrahydrodipicolinate + NADH + H(+). The enzyme catalyses (S)-2,3,4,5-tetrahydrodipicolinate + NADP(+) + H2O = (2S,4S)-4-hydroxy-2,3,4,5-tetrahydrodipicolinate + NADPH + H(+). Its pathway is amino-acid biosynthesis; L-lysine biosynthesis via DAP pathway; (S)-tetrahydrodipicolinate from L-aspartate: step 4/4. Catalyzes the conversion of 4-hydroxy-tetrahydrodipicolinate (HTPA) to tetrahydrodipicolinate. The protein is 4-hydroxy-tetrahydrodipicolinate reductase of Magnetococcus marinus (strain ATCC BAA-1437 / JCM 17883 / MC-1).